The following is a 551-amino-acid chain: MDSVRTFEACFLSTAAEITFFLKNITTTGNRAQSTKVVLNTLTAIVVVWICYRAVIYPKFISSLRHLPTAKRKYPLIGYGPAQFANSRGELFLEMAKAIPNEGLIRFHGFLETENLLLTSPEAIQEVLVKNSYNFIKPRGAKALFDRFLGSEVLFASEGPNHRNSKKHMQPPFNLSKVKILYSMFWDKAVKMSDDIGRSVIPSEKEILVTDVDMHAHNATLDAVMRALFGEKIEKSPYKHEILRLLDSVLGGSWDVTAYFMMTAFLPLWTLKLIPGGINDRVNFSSYRLRQSVRAFLNERKDESGSNKSDDIAMEMANSDYFTDDELVANLLGLMMAGIEPTAAGFVWIAWYLAIHPDWQTKVRNELKANIAHRFFTDDPTSFDAASVLESLPILNAVCNEGLRLKPPAPTSNRIAKFDTTILGHPVKAGTRIFISPFVSNRSEEFWGLTAAMYDPSRWLGDQKSGRKEVYNSRGGAATSTHCGFLPFLHGPRKCIGSIYAQAEMRAFIACLVGRFEFEMADKEEEMISAGILTSKPKGGLKLRLHKVKKW.

The N-linked (GlcNAc...) asparagine glycan is linked to N24. A helical membrane pass occupies residues 37-57 (VVLNTLTAIVVVWICYRAVIY). N-linked (GlcNAc...) asparagine glycosylation is found at N174, N218, N283, N307, and N441. C495 lines the heme pocket.

It belongs to the cytochrome P450 family. It depends on heme as a cofactor.

It localises to the membrane. Its function is as follows. Cytochrome P450 monooxygenase; part of the gene cluster that mediates the biosynthesis of abscisic acid (ABA), a phytohormone that acts antagonistically toward salicylic acid (SA), jasmonic acid (JA) and ethylene (ETH) signaling, to impede plant defense responses. The first step of the pathway catalyzes the reaction from farnesyl diphosphate to alpha-ionylideneethane performed by the alpha-ionylideneethane synthase abl3 via a three-step reaction mechanism involving 2 neutral intermediates, beta-farnesene and allofarnesene. The cytochrome P450 monooxygenase abl1 might then be involved in the conversion of alpha-ionylideneethane to alpha-ionylideneacetic acid. Alpha-ionylideneacetic acid is further converted to abscisic acid in 2 steps involving the cytochrome P450 monooxygenase abl2 and the short-chain dehydrogenase/reductase abl4, via the intermediates 1'-deoxy-ABA or 1',4'-trans-diol-ABA, depending on the order of action of these 2 enzymes. Abl2 is responsible for the hydroxylation of carbon atom C-1' and abl4 might be involved in the oxidation of the C-4' carbon atom. The cytochrome monooxygenase abl5 seems not essential for the biosynthesis of ABA and its function remains to be identified. This Leptosphaeria maculans (strain JN3 / isolate v23.1.3 / race Av1-4-5-6-7-8) (Blackleg fungus) protein is Cytochrome P450 monooxygenase abl5.